Reading from the N-terminus, the 100-residue chain is Large ribosomal subunit protein bL21 (100 aa).

This sequence belongs to the bacterial ribosomal protein bL21 family. Part of the 50S ribosomal subunit. Contacts protein L20.

This protein binds to 23S rRNA in the presence of protein L20. In Wolbachia sp. subsp. Brugia malayi (strain TRS), this protein is Large ribosomal subunit protein bL21.